A 354-amino-acid chain; its full sequence is Probable cinnamyl alcohol dehydrogenase 5 (354 aa).

Residue C43 participates in Zn(2+) binding. NADP(+) is bound at residue S45. 7 residues coordinate Zn(2+): H65, E66, C96, C99, C102, C110, and C159. NADP(+) contacts are provided by residues T163, 184 to 189 (GLGGLG), 207 to 212 (SSSPGK), T247, G271, and 294 to 296 (SCI).

It belongs to the zinc-containing alcohol dehydrogenase family. As to quaternary structure, homodimer. Zn(2+) is required as a cofactor.

It carries out the reaction (E)-cinnamyl alcohol + NADP(+) = (E)-cinnamaldehyde + NADPH + H(+). The catalysed reaction is (E)-coniferol + NADP(+) = (E)-coniferaldehyde + NADPH + H(+). The enzyme catalyses (E)-sinapyl alcohol + NADP(+) = (E)-sinapaldehyde + NADPH + H(+). It catalyses the reaction (E)-4-coumaroyl alcohol + NADP(+) = (E)-4-coumaraldehyde + NADPH + H(+). It carries out the reaction (E)-caffeyl alcohol + NADP(+) = (E)-caffeyl aldehyde + NADPH + H(+). The protein operates within aromatic compound metabolism; phenylpropanoid biosynthesis. In terms of biological role, involved in lignin biosynthesis. Catalyzes the final step specific for the production of lignin monomers. Catalyzes the NADPH-dependent reduction of coniferaldehyde, 5-hydroxyconiferaldehyde, sinapaldehyde, 4-coumaraldehyde and caffeyl aldehyde to their respective alcohols. In Oryza sativa subsp. japonica (Rice), this protein is Probable cinnamyl alcohol dehydrogenase 5.